We begin with the raw amino-acid sequence, 252 residues long: uncharacterized protein (252 aa).

The chain crosses the membrane as a helical span at residues 80–100; the sequence is LSVLVIGSTMFTHAGVLPVLA.

The protein localises to the host membrane. It is found in the virion. This is an uncharacterized protein from Acanthamoeba polyphaga mimivirus (APMV).